A 383-amino-acid chain; its full sequence is MAKHLFTSESVSEGHPDKIADQISDAVLDAILEQDPKARVACETYVKTGMVMVGGEITTSAWVDIEELTRKTVREIGYVHSDMGFDADSCAVLSAIGKQSPDINQGVDRADPREQGAGDQGLMFGYASNETDVLMPAPITYAHALVKRQSEVRKDGTLSWLRPDAKSQVTFAYDEGKIVGIDAIVLSTQHCDSVSQSDLVEGVMETIIKPVVPAQWLNKDTKFFINPTGRFVIGGPMGDCGLTGRKIIVDTYGGMARHGGGAFSGKDPSKVDRSAAYAARYVAKNIVAAGLADRCEIQVSYAIGVAEPTSISIETFGTGKLPEDKLIALVRQHFDLRPYGLTEMLNLARPIYQATAAYGHFGRNEFPWEQTNKAEALRADSGL.

His15 is an ATP binding site. Asp17 lines the Mg(2+) pocket. Glu43 serves as a coordination point for K(+). L-methionine is bound by residues Glu56 and Gln99. Residues 99-109 are flexible loop; that stretch reads QSPDINQGVDR. Residues 164–166, 230–231, Asp239, 245–246, Ala262, and Lys266 each bind ATP; these read DAK, RF, and RK. Asp239 provides a ligand contact to L-methionine. Lys270 contributes to the L-methionine binding site.

The protein belongs to the AdoMet synthase family. As to quaternary structure, homotetramer; dimer of dimers. Requires Mg(2+) as cofactor. K(+) serves as cofactor.

The protein resides in the cytoplasm. The enzyme catalyses L-methionine + ATP + H2O = S-adenosyl-L-methionine + phosphate + diphosphate. Its pathway is amino-acid biosynthesis; S-adenosyl-L-methionine biosynthesis; S-adenosyl-L-methionine from L-methionine: step 1/1. In terms of biological role, catalyzes the formation of S-adenosylmethionine (AdoMet) from methionine and ATP. The overall synthetic reaction is composed of two sequential steps, AdoMet formation and the subsequent tripolyphosphate hydrolysis which occurs prior to release of AdoMet from the enzyme. The polypeptide is S-adenosylmethionine synthase (Shewanella amazonensis (strain ATCC BAA-1098 / SB2B)).